A 295-amino-acid chain; its full sequence is Protease HtpX homolog (295 aa).

A run of 2 helical transmembrane segments spans residues isoleucine 6–valine 26 and leucine 40–leucine 60. Zn(2+) is bound at residue histidine 148. The active site involves glutamate 149. Histidine 152 is a Zn(2+) binding site. Transmembrane regions (helical) follow at residues leucine 163–leucine 183 and isoleucine 198–phenylalanine 218. Position 223 (glutamate 223) interacts with Zn(2+).

It belongs to the peptidase M48B family. The cofactor is Zn(2+).

The protein resides in the cell inner membrane. The polypeptide is Protease HtpX homolog (Leptospira interrogans serogroup Icterohaemorrhagiae serovar copenhageni (strain Fiocruz L1-130)).